The following is a 217-amino-acid chain: Ufm1-specific protease 1 (217 aa).

Catalysis depends on residues Cys-53, Asp-175, and His-177.

The protein belongs to the peptidase C78 family. Widely expressed. Expressed at higher level in brain, heart, kidney and skeletal muscle.

The protein localises to the cytoplasm. It localises to the cytosol. Functionally, thiol-dependent isopeptidase that specifically mediate the processing of UFM1 precursors as well as the deconjugation of UFM1 from target proteins. Mainly responsible for the maturation of the UFM1 precursor, a prerequisite for conjugation reactions. This is Ufm1-specific protease 1 from Mus musculus (Mouse).